A 564-amino-acid polypeptide reads, in one-letter code: Keratin, type II cytoskeletal 6B (564 aa).

The segment covering 1–11 has biased composition (low complexity); that stretch reads MASTSTTIRSH. The interval 1 to 23 is disordered; sequence MASTSTTIRSHSSSRRGFSANSA. Position 2 is an N-acetylalanine (A2). The segment at 2-162 is head; it reads ASTSTTIRSH…DPAIQRVRAE (161 aa). Residues 163-198 form a coil 1A region; that stretch reads EREQIKTLNNKFASFIDKVRFLEQQNKVLDTKWTLL. An IF rod domain is found at 163 to 476; that stretch reads EREQIKTLNN…KLLEGEECRL (314 aa). The segment at 199–217 is linker 1; that stretch reads QEQGTKTVRQNLEPLFEQY. A coil 1B region spans residues 218-309; that stretch reads INNLRRQLDN…ALYDAELSQM (92 aa). Residues 310 to 333 form a linker 12 region; that stretch reads QTHISDTSVVLSMDNNRNLDLDSI. A coil 2 region spans residues 334 to 472; sequence IAEVKAQYEE…ATYRKLLEGE (139 aa). Residues 473–564 are tail; the sequence is ECRLNGEGVG…SSSSRKSYKH (92 aa). The segment at 533–564 is disordered; sequence RATGGGLSSVGGGSSTIKYTTTSSSSRKSYKH. The span at 534–546 shows a compositional bias: gly residues; sequence ATGGGLSSVGGGS. The span at 547-564 shows a compositional bias: low complexity; that stretch reads STIKYTTTSSSSRKSYKH.

The protein belongs to the intermediate filament family. Heterodimer of a type I and a type II keratin. KRT6 isomers associate with KRT16 and/or KRT17. In terms of tissue distribution, constitutively expressed in distinct types of epithelia such as those in oral mucosa, esophagus, papillae of tongue and hair follicle outer root sheath.

The polypeptide is Keratin, type II cytoskeletal 6B (KRT6B) (Homo sapiens (Human)).